Here is a 313-residue protein sequence, read N- to C-terminus: Ornithine carbamoyltransferase (313 aa).

Residues 61–64, Gln-88, Arg-112, and 139–142 contribute to the carbamoyl phosphate site; these read STRT and HPCQ. L-ornithine-binding positions include Asn-170, Asp-228, and 232–233; that span reads SM. Carbamoyl phosphate contacts are provided by residues 268–269 and Arg-296; that span reads CL.

This sequence belongs to the aspartate/ornithine carbamoyltransferase superfamily. OTCase family.

Its subcellular location is the cytoplasm. The catalysed reaction is carbamoyl phosphate + L-ornithine = L-citrulline + phosphate + H(+). Its pathway is amino-acid biosynthesis; L-arginine biosynthesis; L-arginine from L-ornithine and carbamoyl phosphate: step 1/3. Reversibly catalyzes the transfer of the carbamoyl group from carbamoyl phosphate (CP) to the N(epsilon) atom of ornithine (ORN) to produce L-citrulline. In Bordetella parapertussis (strain 12822 / ATCC BAA-587 / NCTC 13253), this protein is Ornithine carbamoyltransferase.